A 219-amino-acid chain; its full sequence is ADP-sugar pyrophosphatase (219 aa).

Met1 carries the N-acetylmethionine modification. 2 positions are modified to phosphoserine: Ser3 and Ser10. Trp28 provides a ligand contact to substrate. Residue Lys42 forms a Glycyl lysine isopeptide (Lys-Gly) (interchain with G-Cter in SUMO2) linkage. The residue at position 45 (Thr45) is a Phosphothreonine. Substrate is bound by residues 46 to 47 (WE) and Arg51. The 141-residue stretch at 57-197 (QTADGVAVIP…EEHLTVDARV (141 aa)) folds into the Nudix hydrolase domain. Tyr74 carries the phosphotyrosine modification. Arg84 contributes to the substrate binding site. Ala96 provides a ligand contact to Mg(2+). Residues 97–118 (GLIDDGETPEAAALRELEEETG) carry the Nudix box motif. A substrate-binding site is contributed by Leu98. Residues Glu112 and Glu116 each contribute to the Mg(2+) site. A substrate-binding site is contributed by Asp133. Position 166 (Glu166) interacts with Mg(2+). 2 positions are modified to N6-acetyllysine: Lys210 and Lys218.

This sequence belongs to the Nudix hydrolase family. Homodimer. Interacts with PARG. It depends on Mg(2+) as a cofactor. Phosphorylation at Thr-45 is required for homodimer stability; dephosphorylation results in destabilization of the homodimer. Dephosphorylation at Thr-45 promotes the ATP-synthesis activity. As to expression, widely expressed. Most abundant in liver.

The protein localises to the nucleus. The enzyme catalyses D-ribose 5-phosphate + ATP + H(+) = ADP-D-ribose + diphosphate. It catalyses the reaction ADP-D-ribose + H2O = D-ribose 5-phosphate + AMP + 2 H(+). The catalysed reaction is 8-oxo-dGDP + H2O = 8-oxo-dGMP + phosphate + H(+). Its function is as follows. Enzyme that can either act as an ADP-sugar pyrophosphatase in absence of diphosphate or catalyze the synthesis of ATP in presence of diphosphate. In absence of diphosphate, hydrolyzes with similar activities various modified nucleoside diphosphates such as ADP-ribose, ADP-mannose, ADP-glucose, 8-oxo-GDP and 8-oxo-dGDP. Can also hydrolyze other nucleotide sugars with low activity. In presence of diphosphate, mediates the synthesis of ATP in the nucleus by catalyzing the conversion of ADP-ribose to ATP and ribose 5-phosphate. Nuclear ATP synthesis takes place when dephosphorylated at Thr-45. Nuclear ATP generation is required for extensive chromatin remodeling events that are energy-consuming. Does not play a role in U8 snoRNA decapping activity. Binds U8 snoRNA. The protein is ADP-sugar pyrophosphatase (NUDT5) of Homo sapiens (Human).